Here is a 137-residue protein sequence, read N- to C-terminus: Protein MesC (137 aa).

This Leuconostoc mesenteroides protein is Protein MesC (mesC).